The following is a 71-amino-acid chain: Translational regulator CsrA (71 aa).

Belongs to the CsrA/RsmA family. Homodimer; the beta-strands of each monomer intercalate to form a hydrophobic core, while the alpha-helices form wings that extend away from the core.

The protein resides in the cytoplasm. A key translational regulator that binds mRNA to regulate translation initiation and/or mRNA stability. Mediates global changes in gene expression, shifting from rapid growth to stress survival by linking envelope stress, the stringent response and the catabolite repression systems. Usually binds in the 5'-UTR; binding at or near the Shine-Dalgarno sequence prevents ribosome-binding, repressing translation, binding elsewhere in the 5'-UTR can activate translation and/or stabilize the mRNA. Its function is antagonized by small RNA(s). This Pseudoalteromonas atlantica (strain T6c / ATCC BAA-1087) protein is Translational regulator CsrA.